We begin with the raw amino-acid sequence, 628 residues long: EIN3-binding F-box protein 1 (628 aa).

In terms of domain architecture, F-box spans 61–109 (PVSIDVLPDECLFEIFRRLSGPQERSACAFVSKQWLTLVSSIRQKEIDV).

As to quaternary structure, part of a SCF (SKP1-cullin-F-box) protein ligase complex. Interacts with CUL1, SKP1A/ASK1, SKP1B/ASK2, ASK11, ASK12, ASK13, ASK18, EIN3, and EIL1. In terms of tissue distribution, ubiquitous.

The protein resides in the nucleus. Its pathway is protein modification; protein ubiquitination. Its function is as follows. Component of SCF(EBF1) E3 ubiquitin ligase complexes, which may mediate the ubiquitination and subsequent proteasomal degradation of target proteins (probably including EIN3 and EIL1). Regulator of the ethylene signaling cascade by modulating the stability of EIN3 and EIL1 proteins. Confers insensitivity to ethylene. In Arabidopsis thaliana (Mouse-ear cress), this protein is EIN3-binding F-box protein 1 (EBF1).